A 253-amino-acid polypeptide reads, in one-letter code: Tryptophan synthase alpha chain (253 aa).

Active-site proton acceptor residues include Glu47 and Asp58.

It belongs to the TrpA family. In terms of assembly, tetramer of two alpha and two beta chains.

It carries out the reaction (1S,2R)-1-C-(indol-3-yl)glycerol 3-phosphate + L-serine = D-glyceraldehyde 3-phosphate + L-tryptophan + H2O. It participates in amino-acid biosynthesis; L-tryptophan biosynthesis; L-tryptophan from chorismate: step 5/5. Its function is as follows. The alpha subunit is responsible for the aldol cleavage of indoleglycerol phosphate to indole and glyceraldehyde 3-phosphate. This Lactococcus lactis subsp. lactis (strain IL1403) (Streptococcus lactis) protein is Tryptophan synthase alpha chain.